The primary structure comprises 402 residues: Multidrug resistance protein MdtH (402 aa).

11 consecutive transmembrane segments (helical) span residues 13-33 (YFLLVDNMLVVLGFFVVFPLI), 34-54 (SIRFVDQMGWAALMVGIALGL), 99-116 (PWVLWFSCILSGLGGTLF), 139-159 (ILMMQDSAGAVIGALLGSWLL), 165-185 (LVCSAGAALFIACAAFNAWYL), 214-234 (VLTLTGYYMLAVQVMLMLPIM), 243-263 (AAVKWMYAIEATISLTLLYPI), 277-297 (LMAGLLVMTLAMLPIGMTSSL), 300-320 (LFTLICLFYIGSIIAEPARET), 340-360 (LGLAFGGALGYAGGGWLFDAG), and 369-389 (PWLMLGAIGVITFLALWWQFS).

The protein belongs to the major facilitator superfamily. DHA1 family. MdtH (TC 2.A.1.2.21) subfamily.

The protein localises to the cell inner membrane. The polypeptide is Multidrug resistance protein MdtH (Klebsiella pneumoniae subsp. pneumoniae (strain ATCC 700721 / MGH 78578)).